The chain runs to 579 residues: Transcription factor COE2 (579 aa).

Residues 63–66 (RKSN) form an interaction with DNA region. The C5-type zinc-finger motif lies at 149-168 (CRVLLTHEVMCSRCCEKKSC). 2 interaction with DNA regions span residues 195-202 (NCLKTAGN) and 234-237 (NNSK). Residues 260 to 343 (PCIKAISPSE…KGAPGRFIYT (84 aa)) form the IPT/TIG domain. Disordered regions lie at residues 442 to 482 (GVSI…YGSN), 514 to 533 (AIMP…LPFS), and 549 to 579 (LRPQ…VPPM). Residues 449 to 459 (GQTSGQGYTRN) show a composition bias toward polar residues. Low complexity-rich tracts occupy residues 460 to 472 (SSSL…PSSS) and 521 to 533 (PGSS…LPFS).

It belongs to the COE family.

Its subcellular location is the nucleus. The polypeptide is Transcription factor COE2 (coe2) (Danio rerio (Zebrafish)).